A 179-amino-acid chain; its full sequence is Putative undecaprenyl-phosphate N-acetylgalactosaminyl 1-phosphate transferase (179 aa).

Residues 39–59 (IWFALIGLAIALPMIAVFSIL) traverse the membrane as a helical segment.

It belongs to the bacterial sugar transferase family.

The protein resides in the cell membrane. The catalysed reaction is di-trans,octa-cis-undecaprenyl phosphate + UDP-N-acetyl-alpha-D-galactosamine = N-acetyl-alpha-D-galactosaminyl-di-trans,octa-cis-undecaprenyl diphosphate + UMP. Its pathway is cell wall biogenesis; teichuronic acid biosynthesis. In terms of biological role, might mediate the very first reaction in teichuronic synthesis, i.e. the formation of lipid-linked N-acetylglucosamine. This is Putative undecaprenyl-phosphate N-acetylgalactosaminyl 1-phosphate transferase (tuaA) from Bacillus subtilis (strain 168).